The primary structure comprises 399 residues: Tryptophan synthase beta chain (399 aa).

An N6-(pyridoxal phosphate)lysine modification is found at lysine 92.

This sequence belongs to the TrpB family. As to quaternary structure, tetramer of two alpha and two beta chains. It depends on pyridoxal 5'-phosphate as a cofactor.

The enzyme catalyses (1S,2R)-1-C-(indol-3-yl)glycerol 3-phosphate + L-serine = D-glyceraldehyde 3-phosphate + L-tryptophan + H2O. Its pathway is amino-acid biosynthesis; L-tryptophan biosynthesis; L-tryptophan from chorismate: step 5/5. In terms of biological role, the beta subunit is responsible for the synthesis of L-tryptophan from indole and L-serine. In Acidithiobacillus ferrooxidans (strain ATCC 23270 / DSM 14882 / CIP 104768 / NCIMB 8455) (Ferrobacillus ferrooxidans (strain ATCC 23270)), this protein is Tryptophan synthase beta chain.